Consider the following 353-residue polypeptide: Beta-hexosaminidase (353 aa).

Residues Asp74, Arg82, Arg149, and 179-180 (KH) each bind substrate. His192 serves as the catalytic Proton donor/acceptor. Asp263 acts as the Nucleophile in catalysis.

The protein belongs to the glycosyl hydrolase 3 family. NagZ subfamily.

The protein resides in the cytoplasm. The enzyme catalyses Hydrolysis of terminal non-reducing N-acetyl-D-hexosamine residues in N-acetyl-beta-D-hexosaminides.. It functions in the pathway cell wall biogenesis; peptidoglycan recycling. Its function is as follows. Plays a role in peptidoglycan recycling by cleaving the terminal beta-1,4-linked N-acetylglucosamine (GlcNAc) from peptide-linked peptidoglycan fragments, giving rise to free GlcNAc, anhydro-N-acetylmuramic acid and anhydro-N-acetylmuramic acid-linked peptides. The polypeptide is Beta-hexosaminidase (Bordetella bronchiseptica (strain ATCC BAA-588 / NCTC 13252 / RB50) (Alcaligenes bronchisepticus)).